Here is a 344-residue protein sequence, read N- to C-terminus: tRNA N6-adenosine threonylcarbamoyltransferase (344 aa).

Fe cation contacts are provided by H116 and H120. Residues L138–G142, D171, G184, D188, and N277 contribute to the substrate site. D307 is a Fe cation binding site.

This sequence belongs to the KAE1 / TsaD family. Fe(2+) serves as cofactor.

The protein resides in the cytoplasm. The enzyme catalyses L-threonylcarbamoyladenylate + adenosine(37) in tRNA = N(6)-L-threonylcarbamoyladenosine(37) in tRNA + AMP + H(+). In terms of biological role, required for the formation of a threonylcarbamoyl group on adenosine at position 37 (t(6)A37) in tRNAs that read codons beginning with adenine. Is involved in the transfer of the threonylcarbamoyl moiety of threonylcarbamoyl-AMP (TC-AMP) to the N6 group of A37, together with TsaE and TsaB. TsaD likely plays a direct catalytic role in this reaction. The polypeptide is tRNA N6-adenosine threonylcarbamoyltransferase (Latilactobacillus sakei subsp. sakei (strain 23K) (Lactobacillus sakei subsp. sakei)).